Here is a 387-residue protein sequence, read N- to C-terminus: Sulfoacetaldehyde reductase (387 aa).

Belongs to the iron-containing alcohol dehydrogenase family.

The enzyme catalyses 2-hydroxyethane-1-sulfonate + NAD(+) = sulfoacetaldehyde + NADH + H(+). It participates in organosulfur degradation; alkanesulfonate degradation. Functionally, involved in an anaerobic respiration pathway that converts the sulfonate taurine (2-aminoethanesulfonate) to ammonia, acetate and sulfide. Catalyzes the NADH-dependent reduction of sulfoacetaldehyde to 2-hydroxyethane-1-sulfonate (isethionate). Does not accept acetaldehyde as a substrate. This chain is Sulfoacetaldehyde reductase, found in Bilophila wadsworthia (strain 3_1_6).